Here is a 414-residue protein sequence, read N- to C-terminus: Enterobactin exporter EntS (414 aa).

Topologically, residues 1 to 21 (MNRQSWLLNLSLLKTHPAFRA) are cytoplasmic. The helical transmembrane segment at 22 to 42 (VFLARFISIVSLGLLGVAVPV) threads the bilayer. Residues 43–55 (QIQMMTHSTWQVG) lie on the Periplasmic side of the membrane. A helical membrane pass occupies residues 56–76 (LSVTLTGGAMFIGLMVGGVLA). Residues 77–83 (DRYERKK) lie on the Cytoplasmic side of the membrane. A helical transmembrane segment spans residues 84 to 104 (VILLARGTCGIGFIGLCVNAL). Residues 105 to 109 (LPEPS) are Periplasmic-facing. Residues 110–130 (LLAIYLLGLWDGFFASLGVTA) traverse the membrane as a helical segment. The Cytoplasmic portion of the chain corresponds to 131–156 (LLAATPALVGRENLMQAGAITMLTVR). A helical transmembrane segment spans residues 157 to 177 (LGSVISPMLGGILLASGGVAW). Position 178 (Asn178) is a topological domain, periplasmic. Residues 179–199 (YGLAAAGTFITLLPLLTLPRL) traverse the membrane as a helical segment. Over 200–218 (PVPPQPRENPFLALLAAFR) the chain is Cytoplasmic. Residues 219–239 (FLLACPLIGGIALLGGLVTMA) traverse the membrane as a helical segment. Topologically, residues 240–256 (SAVRVLYPALAMSWQMS) are periplasmic. The helical transmembrane segment at 257 to 277 (AAQIGLLYAAIPLGAAIGALT) threads the bilayer. Residues 278 to 287 (SGQLAHSVRP) lie on the Cytoplasmic side of the membrane. A helical transmembrane segment spans residues 288–307 (GLIMLVSTVGSFLAVGLFAI). Residues 308–313 (MPVWIA) are Periplasmic-facing. A helical transmembrane segment spans residues 314–336 (GVICLALFGWLSAISSLLQYTLL). The Cytoplasmic segment spans residues 337-356 (QTQTPENMLGRMNGLWTAQN). Residues 357-377 (VTGDAIGAALLGGLGAMMTPV) traverse the membrane as a helical segment. Residue Ala378 is a topological domain, periplasmic. The helical transmembrane segment at 379–399 (SASVSGFGLVIIGLLLLLVLG) threads the bilayer. Topologically, residues 400–414 (ELRRFRQTSPVSDAG) are cytoplasmic.

The protein belongs to the major facilitator superfamily. EntS (TC 2.A.1.38) family.

It is found in the cell inner membrane. Component of an export pathway for enterobactin. This is Enterobactin exporter EntS from Salmonella paratyphi A (strain ATCC 9150 / SARB42).